We begin with the raw amino-acid sequence, 348 residues long: Uroporphyrinogen decarboxylase (348 aa).

Substrate is bound by residues Arg-23–Arg-27, Asp-72, Tyr-148, Ser-203, and His-316.

The protein belongs to the uroporphyrinogen decarboxylase family. As to quaternary structure, homodimer.

Its subcellular location is the cytoplasm. The enzyme catalyses uroporphyrinogen III + 4 H(+) = coproporphyrinogen III + 4 CO2. The protein operates within porphyrin-containing compound metabolism; protoporphyrin-IX biosynthesis; coproporphyrinogen-III from 5-aminolevulinate: step 4/4. Catalyzes the decarboxylation of four acetate groups of uroporphyrinogen-III to yield coproporphyrinogen-III. The polypeptide is Uroporphyrinogen decarboxylase (Myxococcus xanthus (strain DK1622)).